The following is a 315-amino-acid chain: Neuroguidin (315 aa).

Position 2 is an N-acetylalanine (A2). The stretch at 13–41 (SAVTLLKNLQEQVMAVTAQVKSLTQKVQA) forms a coiled coil. The tract at residues 41 to 174 (AGAYPTEKGL…KGVSKKYVPP (134 aa)) is necessary for interaction with EIF4E. S121, S142, and S143 each carry phosphoserine. Residues 124-169 (ENDPLRFKPHPSNMMSKLSSEDEEEDEAEDDQSEASGKKSVKGVSK) are disordered. Residues 144–156 (EDEEEDEAEDDQS) show a composition bias toward acidic residues. Positions 181–205 (YDETEAEREKKRLERAKRRALSSSV) form a coiled coil. Residues S204 and S214 each carry the phosphoserine modification. The interval 277 to 315 (DISALTGGTVHLDEDQNPIKKRKKIPQKGRKKKGFRRRR) is disordered. Residues 295 to 315 (IKKRKKIPQKGRKKKGFRRRR) show a composition bias toward basic residues.

Belongs to the SAS10 family. Part of the small subunit (SSU) processome, composed of more than 70 proteins and the RNA chaperone small nucleolar RNA (snoRNA) U3. Interacts with CPEB1 and EIF4E.

It localises to the nucleus. The protein localises to the nucleolus. It is found in the chromosome. The protein resides in the centromere. Its subcellular location is the cytoplasm. It localises to the cell projection. The protein localises to the axon. It is found in the dendrite. The protein resides in the filopodium. In terms of biological role, part of the small subunit (SSU) processome, first precursor of the small eukaryotic ribosomal subunit. During the assembly of the SSU processome in the nucleolus, many ribosome biogenesis factors, an RNA chaperone and ribosomal proteins associate with the nascent pre-rRNA and work in concert to generate RNA folding, modifications, rearrangements and cleavage as well as targeted degradation of pre-ribosomal RNA by the RNA exosome. Its dissociation from the complex determines the transition from state pre-A1 to state pre-A1*. Inhibits mRNA translation in a cytoplasmic polyadenylation element (CPE)-dependent manner. The polypeptide is Neuroguidin (Homo sapiens (Human)).